Consider the following 421-residue polypeptide: Serine hydroxymethyltransferase (421 aa).

Residues Leu-121 and 125 to 127 (GHL) each bind (6S)-5,6,7,8-tetrahydrofolate. Lys-230 is subject to N6-(pyridoxal phosphate)lysine. Residue 355–357 (SPF) participates in (6S)-5,6,7,8-tetrahydrofolate binding.

The protein belongs to the SHMT family. Homodimer. Pyridoxal 5'-phosphate serves as cofactor.

Its subcellular location is the cytoplasm. It catalyses the reaction (6R)-5,10-methylene-5,6,7,8-tetrahydrofolate + glycine + H2O = (6S)-5,6,7,8-tetrahydrofolate + L-serine. It functions in the pathway one-carbon metabolism; tetrahydrofolate interconversion. It participates in amino-acid biosynthesis; glycine biosynthesis; glycine from L-serine: step 1/1. In terms of biological role, catalyzes the reversible interconversion of serine and glycine with tetrahydrofolate (THF) serving as the one-carbon carrier. This reaction serves as the major source of one-carbon groups required for the biosynthesis of purines, thymidylate, methionine, and other important biomolecules. Also exhibits THF-independent aldolase activity toward beta-hydroxyamino acids, producing glycine and aldehydes, via a retro-aldol mechanism. This is Serine hydroxymethyltransferase from Cellvibrio japonicus (strain Ueda107) (Pseudomonas fluorescens subsp. cellulosa).